A 633-amino-acid polypeptide reads, in one-letter code: Protein arginine N-methyltransferase 5 (633 aa).

Positions 304 to 611 (LQSPLQPLMD…NNGKKVWYEW (308 aa)) constitute an SAM-dependent MTase PRMT-type domain. S-adenosyl-L-methionine is bound at residue Tyr-320. Phe-323 is a binding site for a protein. Residues 329-330 (KY), Glu-388, and 414-416 (GDM) contribute to the S-adenosyl-L-methionine site. A protein contacts are provided by Glu-431 and Glu-440. Residues Glu-431 and Glu-440 each act as proton donor/acceptor in the active site. Residue Glu-440 participates in S-adenosyl-L-methionine binding.

This sequence belongs to the class I-like SAM-binding methyltransferase superfamily. Protein arginine N-methyltransferase family. Heterotetramer; dimer of heterodimer with wdr77. Interacts with wee2-a; this interaction is disrupted upon activation of the DNA replication checkpoint. Detected in egg (at protein level).

Its subcellular location is the cytoplasm. It is found in the nucleus. The protein localises to the cytosol. It catalyses the reaction L-arginyl-[protein] + 2 S-adenosyl-L-methionine = N(omega),N(omega)'-dimethyl-L-arginyl-[protein] + 2 S-adenosyl-L-homocysteine + 2 H(+). In terms of biological role, arginine methyltransferase that can both catalyze the formation of omega-N monomethylarginine (MMA) and symmetrical dimethylarginine (sDMA), with a preference for the formation of MMA. Specifically mediates the symmetrical dimethylation of arginine residues in the small nuclear ribonucleoproteins; such methylation being required for the assembly and biogenesis of snRNP core particles. Methylates the arginine in the motif G-R-G-X-G in its substrates histone H2A, H2AX and H4, producing both monomethylated and symmetrically dimethylated 'Arg-3'. Methylates nucleoplasmin at 'Arg-192', producing both monomethylated and symmetrically dimethylated 'Arg-192'. Involved in the DNA replication checkpoint. Promotes entry into mitosis by promoting the proteasomal degradation of wee2-a. May act as a transcriptional corepressor in CRY1-mediated repression of the core circadian component PER1. Involved in spliceosome maturation and mRNA splicing. The protein is Protein arginine N-methyltransferase 5 (prmt5) of Xenopus laevis (African clawed frog).